Consider the following 395-residue polypeptide: uncharacterized protein (395 aa).

12 consecutive transmembrane segments (helical) span residues Leu12 to Leu34, Leu44 to Leu66, Tyr75 to Asn94, Val99 to Phe121, Phe134 to Val156, Ile160 to Val182, Leu208 to Ser230, Val245 to Val264, Ala271 to Phe293, Leu298 to Tyr320, Leu341 to Leu360, and Ser364 to Leu381.

This sequence belongs to the major facilitator superfamily.

It localises to the cell inner membrane. A transporter able to export peptides. When overexpressed, allows cells deleted for multiple peptidases (pepA, pepB, pepD and pepN) to grow in the presence of dipeptides Ala-Gln or Gly-Tyr which otherwise inhibit growth. Cells overexpressing this protein have decreased intracellular levels of Ala-Gln dipeptide, and in a system that produces the Ala-Gln dipeptide overproduction of this protein increases export of the dipeptide. This is an uncharacterized protein from Escherichia coli (strain K12).